Reading from the N-terminus, the 165-residue chain is Protein YELLOW LEAF 1, choloroplastic (165 aa).

A chloroplast-targeting transit peptide spans 1–51 (MPPLATMSSPGSLLLLTPAVYQGIGRNRGGQSQEGQSISSSRSLKTKLSVS). The tract at residues 71 to 118 (TQTARRKSFSGPTSPPSGSVKEKVRSPKLDDGGTGFPPFRFGGGGGGG) is disordered. The segment covering 79–89 (FSGPTSPPSGS) has biased composition (low complexity). Over residues 90–101 (VKEKVRSPKLDD) the composition is skewed to basic and acidic residues.

In terms of assembly, interacts with atpB. As to expression, highly expressed in leaves. Expressed in leaf sheaths. Expressed at low levels in stems.

It localises to the plastid. Its subcellular location is the chloroplast. Its function is as follows. Required for photosynthetic protein complex assembly in chloroplast thylakoid membranes during leaf development. Maintains the abundance of the core protein complex PsaA-PsaB of photosystem I (PSI) in the thylakoid membrane. May play a role in the efficient biogenesis of the chloroplast ATP synthase complex, possibly by interacting with the beta subunit atpB. The protein is Protein YELLOW LEAF 1, choloroplastic of Oryza sativa subsp. japonica (Rice).